The primary structure comprises 129 residues: F(420)H(2) dehydrogenase subunit A (129 aa).

3 helical membrane-spanning segments follow: residues 9–29, 64–84, and 95–115; these read IIDS…MPPM, FNVE…EVLF, and HGIT…LLFG.

This sequence belongs to the complex I subunit 3 family. In terms of assembly, the FPO complex is composed of at least 13 different subunits. FpoA, FpoH, FpoJ, FpoK, FpoL, FpoM and FpoN proteins constitute the membrane sector of the complex.

The protein resides in the cell membrane. It carries out the reaction methanophenazine + reduced coenzyme F420-(gamma-L-Glu)(n) = dihydromethanophenazine + oxidized coenzyme F420-(gamma-L-Glu)(n) + H(+). Functionally, component of the F(420)H(2) dehydrogenase (FPO complex) which is part of the energy-conserving F(420)H(2):heterodisulfide oxidoreductase system. The membrane-bound electron transfer system of the complex plays an important role in the metabolism of methylotrophic methanogens when the organisms grow on methanol or methylamines. Catalyzes the oxidation of methanophenazine to dihydromethanophenazine. It shuttles electrons from F(420)H(2), via FAD and iron-sulfur (Fe-S) centers, to methanophenazine (an electron carrier in the membrane). It couples the redox reaction to proton translocation (for every two electrons transferred, two hydrogen ions are translocated across the cytoplasmic membrane), and thus conserves the redox energy in a proton gradient. It also catalyzes the oxidation of F(420)H(2) with quinones such as 2,3-dimethyl-1,4-naphthoquinone, 2-methyl-1,4-naphthoquinone and tetramethyl-p-benzoquinone. This Methanosarcina mazei (strain ATCC BAA-159 / DSM 3647 / Goe1 / Go1 / JCM 11833 / OCM 88) (Methanosarcina frisia) protein is F(420)H(2) dehydrogenase subunit A (fpoA).